Reading from the N-terminus, the 105-residue chain is Thioredoxin (105 aa).

A Thioredoxin domain is found at 2–105 (VKLIESKEAF…KLEATITEFA (104 aa)). Lys-3 is modified (N6-acetyllysine). Lys-8 bears the N6-succinyllysine mark. Catalysis depends on nucleophile residues Cys-32 and Cys-35. Cys-32 and Cys-35 are joined by a disulfide. Residue Lys-39 is modified to N6-acetyllysine. Residues Cys-62 and Cys-69 each carry the S-nitrosocysteine modification. Cys-73 is subject to S-nitrosocysteine; alternate. Lys-94 bears the N6-acetyllysine; alternate mark. At Lys-94 the chain carries N6-succinyllysine; alternate.

The protein belongs to the thioredoxin family. As to quaternary structure, homodimer; disulfide-linked. Interacts with TXNIP through the redox-active site. Interacts with MAP3K5 and CASP3. Interacts with APEX1; the interaction stimulates the FOS/JUN AP-1 DNA-binding activity in a redox-dependent manner. In terms of processing, in the fully reduced protein, both Cys-69 and Cys-73 are nitrosylated in response to nitric oxide (NO). When two disulfide bonds are present in the protein, only Cys-73 is nitrosylated. Cys-73 can serve as donor for nitrosylation of target proteins.

Its subcellular location is the nucleus. It localises to the cytoplasm. It is found in the secreted. Its function is as follows. Participates in various redox reactions through the reversible oxidation of its active center dithiol to a disulfide and catalyzes dithiol-disulfide exchange reactions. Plays a role in the reversible S-nitrosylation of cysteine residues in target proteins, and thereby contributes to the response to intracellular nitric oxide. Nitrosylates the active site Cys of CASP3 in response to nitric oxide (NO), and thereby inhibits caspase-3 activity. Induces the FOS/JUN AP-1 DNA binding activity in ionizing radiation (IR) cells through its oxidation/reduction status and stimulates AP-1 transcriptional activity. This Rattus norvegicus (Rat) protein is Thioredoxin (Txn).